We begin with the raw amino-acid sequence, 1376 residues long: DNA-directed RNA polymerase subunit beta'' (1376 aa).

Zn(2+) is bound by residues Cys221, Cys290, Cys297, and Cys300. A disordered region spans residues 895–919 (PSGSGFPSDNELDHSNRNPFSSSYP).

This sequence belongs to the RNA polymerase beta' chain family. RpoC2 subfamily. In terms of assembly, in plastids the minimal PEP RNA polymerase catalytic core is composed of four subunits: alpha, beta, beta', and beta''. When a (nuclear-encoded) sigma factor is associated with the core the holoenzyme is formed, which can initiate transcription. Requires Zn(2+) as cofactor.

The protein resides in the plastid. The protein localises to the chloroplast. It catalyses the reaction RNA(n) + a ribonucleoside 5'-triphosphate = RNA(n+1) + diphosphate. Its function is as follows. DNA-dependent RNA polymerase catalyzes the transcription of DNA into RNA using the four ribonucleoside triphosphates as substrates. This chain is DNA-directed RNA polymerase subunit beta'', found in Pelargonium hortorum (Common geranium).